Reading from the N-terminus, the 101-residue chain is Small ribosomal subunit protein uS14 (101 aa).

Belongs to the universal ribosomal protein uS14 family. Part of the 30S ribosomal subunit. Contacts proteins S3 and S10.

In terms of biological role, binds 16S rRNA, required for the assembly of 30S particles and may also be responsible for determining the conformation of the 16S rRNA at the A site. The polypeptide is Small ribosomal subunit protein uS14 (Histophilus somni (strain 2336) (Haemophilus somnus)).